The chain runs to 374 residues: Hydroxylysine kinase (374 aa).

Catalysis depends on aspartate 228, which acts as the Proton acceptor.

This sequence belongs to the aminoglycoside phosphotransferase family.

It localises to the cytoplasm. The enzyme catalyses (5R)-5-hydroxy-L-lysine + GTP = (5R)-5-phosphooxy-L-lysine + GDP + H(+). Catalyzes the GTP-dependent phosphorylation of 5-hydroxy-L-lysine. The chain is Hydroxylysine kinase (hykk) from Xenopus laevis (African clawed frog).